The chain runs to 932 residues: Isoleucine--tRNA ligase (932 aa).

Positions 57–67 (PYANGDIHIGT) match the 'HIGH' region motif. Residue glutamate 559 participates in L-isoleucyl-5'-AMP binding. Positions 600-604 (KMSKS) match the 'KMSKS' region motif. ATP is bound at residue lysine 603. Residues cysteine 899, cysteine 902, cysteine 919, and cysteine 922 each coordinate Zn(2+).

Belongs to the class-I aminoacyl-tRNA synthetase family. IleS type 1 subfamily. In terms of assembly, monomer. Requires Zn(2+) as cofactor.

Its subcellular location is the cytoplasm. The enzyme catalyses tRNA(Ile) + L-isoleucine + ATP = L-isoleucyl-tRNA(Ile) + AMP + diphosphate. In terms of biological role, catalyzes the attachment of isoleucine to tRNA(Ile). As IleRS can inadvertently accommodate and process structurally similar amino acids such as valine, to avoid such errors it has two additional distinct tRNA(Ile)-dependent editing activities. One activity is designated as 'pretransfer' editing and involves the hydrolysis of activated Val-AMP. The other activity is designated 'posttransfer' editing and involves deacylation of mischarged Val-tRNA(Ile). This is Isoleucine--tRNA ligase from Thermoanaerobacter pseudethanolicus (strain ATCC 33223 / 39E) (Clostridium thermohydrosulfuricum).